Reading from the N-terminus, the 325-residue chain is Small ribosomal subunit protein RACK1 (325 aa).

7 WD repeats span residues 5–48, 58–99, 100–141, 143–186, 187–227, 228–268, and 269–320; these read QMKL…WDVD, IGRP…WDLN, QGVS…WNTL, QCKY…WNLG, NCRL…LWDL, NEGK…WDLE, and DKKE…YQVS.

This sequence belongs to the WD repeat G protein beta family. Ribosomal protein RACK1 subfamily.

Required for the expression of antimicrobial peptide nlp-29 in response to fungal infection or physical injury. The polypeptide is Small ribosomal subunit protein RACK1 (rack-1) (Caenorhabditis elegans).